The sequence spans 148 residues: uncharacterized protein (148 aa).

2 CBS domains span residues 8-68 (MTAD…PNSQ) and 74-130 (MTEK…ERAG). The interval 127 to 148 (ERAGSALSDISEGDNREEGFFH) is disordered. A compositionally biased stretch (basic and acidic residues) spans 139–148 (GDNREEGFFH).

This is an uncharacterized protein from Bacillus subtilis (strain 168).